Here is a 467-residue protein sequence, read N- to C-terminus: Chromosomal replication initiator protein DnaA (467 aa).

The segment at 1–85 is domain I, interacts with DnaA modulators; it reads MTTTLWPQVL…LEVGEYAIES (85 aa). The domain II stretch occupies residues 85–130; that stretch reads SFNEPENTSVPQPLRETKAEREAAEKAASSTSKKKSDSPPKKTIKH. The disordered stretch occupies residues 87-129; that stretch reads NEPENTSVPQPLRETKAEREAAEKAASSTSKKKSDSPPKKTIK. Positions 99–109 are enriched in basic and acidic residues; the sequence is RETKAEREAAE. Residues 131–347 are domain III, AAA+ region; sequence NLNTNFTFDT…GALKRVGAFA (217 aa). ATP-binding residues include Gly-175, Gly-177, Lys-178, and Thr-179. The tract at residues 348-467 is domain IV, binds dsDNA; it reads QFTQQLVTVD…FNSLIRIITN (120 aa).

The protein belongs to the DnaA family. Oligomerizes as a right-handed, spiral filament on DNA at oriC.

The protein resides in the cytoplasm. Plays an essential role in the initiation and regulation of chromosomal replication. ATP-DnaA binds to the origin of replication (oriC) to initiate formation of the DNA replication initiation complex once per cell cycle. Binds the DnaA box (a 9 base pair repeat at the origin) and separates the double-stranded (ds)DNA. Forms a right-handed helical filament on oriC DNA; dsDNA binds to the exterior of the filament while single-stranded (ss)DNA is stabiized in the filament's interior. The ATP-DnaA-oriC complex binds and stabilizes one strand of the AT-rich DNA unwinding element (DUE), permitting loading of DNA polymerase. After initiation quickly degrades to an ADP-DnaA complex that is not apt for DNA replication. Binds acidic phospholipids. This is Chromosomal replication initiator protein DnaA from Hydrogenovibrio crunogenus (strain DSM 25203 / XCL-2) (Thiomicrospira crunogena).